Here is a 470-residue protein sequence, read N- to C-terminus: UDP-glycosyltransferase 72D1 (470 aa).

UDP-alpha-D-glucose-binding positions include serine 276, 343 to 345 (APQ), 360 to 368 (HCGWSSALE), and 382 to 385 (YAEQ).

The protein belongs to the UDP-glycosyltransferase family.

The chain is UDP-glycosyltransferase 72D1 (UGT72D1) from Arabidopsis thaliana (Mouse-ear cress).